Consider the following 98-residue polypeptide: Large ribosomal subunit protein uL23 (98 aa).

It belongs to the universal ribosomal protein uL23 family. As to quaternary structure, part of the 50S ribosomal subunit. Contacts protein L29, and trigger factor when it is bound to the ribosome.

Its function is as follows. One of the early assembly proteins it binds 23S rRNA. One of the proteins that surrounds the polypeptide exit tunnel on the outside of the ribosome. Forms the main docking site for trigger factor binding to the ribosome. This Cereibacter sphaeroides (strain ATCC 17025 / ATH 2.4.3) (Rhodobacter sphaeroides) protein is Large ribosomal subunit protein uL23.